We begin with the raw amino-acid sequence, 31 residues long: Chymotrypsin (31 aa).

Residues Ile-1–Ile-31 form the Peptidase S1 domain.

It belongs to the peptidase S1 family.

It localises to the secreted. The protein localises to the extracellular space. The enzyme catalyses Preferential cleavage: Tyr-|-Xaa, Trp-|-Xaa, Phe-|-Xaa, Leu-|-Xaa.. The protein is Chymotrypsin of Penaeus monodon (Giant tiger prawn).